Consider the following 90-residue polypeptide: Large ribosomal subunit protein bL27 (90 aa).

The tract at residues 1–22 (MAHKKAGGSSRNGRDSESKRLG) is disordered.

Belongs to the bacterial ribosomal protein bL27 family.

In Allorhizobium ampelinum (strain ATCC BAA-846 / DSM 112012 / S4) (Agrobacterium vitis (strain S4)), this protein is Large ribosomal subunit protein bL27.